Here is an 87-residue protein sequence, read N- to C-terminus: Large ribosomal subunit protein uL23c (87 aa).

The protein belongs to the universal ribosomal protein uL23 family. In terms of assembly, part of the 50S ribosomal subunit.

The protein resides in the plastid. Its subcellular location is the chloroplast. Its function is as follows. Binds to 23S rRNA. This chain is Large ribosomal subunit protein uL23c (rpl23), found in Ostreococcus tauri.